We begin with the raw amino-acid sequence, 395 residues long: Phosphoglycerate kinase (395 aa).

Substrate-binding positions include 21-23 (DLN), R36, 59-62 (HLGR), R113, and R146. Residues K197, E324, and 350–353 (GGDT) contribute to the ATP site.

It belongs to the phosphoglycerate kinase family. Monomer.

It is found in the cytoplasm. It catalyses the reaction (2R)-3-phosphoglycerate + ATP = (2R)-3-phospho-glyceroyl phosphate + ADP. The protein operates within carbohydrate degradation; glycolysis; pyruvate from D-glyceraldehyde 3-phosphate: step 2/5. This is Phosphoglycerate kinase from Acinetobacter baumannii (strain ACICU).